We begin with the raw amino-acid sequence, 109 residues long: Cortistatin (109 aa).

The first 25 residues, 1 to 25 (MMGGRGTGGKWPSAFGLLLLWGVAA), serve as a signal peptide directing secretion. The propeptide occupies 26-93 (SALPLESGPT…PPPQQPPHLD (68 aa)). Residues 64 to 97 (ASSSTPVGGGTPGLSKSQERPPPQQPPHLDKKPC) form a disordered region. A disulfide bridge connects residues C97 and C108.

This sequence belongs to the somatostatin family. As to expression, expressed in a subset of GABAergic cells in the cortex and hippocampus.

Its subcellular location is the secreted. This Mus musculus (Mouse) protein is Cortistatin (Cort).